A 223-amino-acid polypeptide reads, in one-letter code: uncharacterized protein (223 aa).

Basic residues predominate over residues 1–11 (MLWVQRKRRRK). Residues 1-37 (MLWVQRKRRRKETSECPSDKDKSPESHKAKNESWIKS) are disordered. Positions 12-37 (ETSECPSDKDKSPESHKAKNESWIKS) are enriched in basic and acidic residues. Ser-43 bears the Phosphoserine mark. Disordered stretches follow at residues 49-73 (LDNN…SSTV) and 196-223 (THTF…NRRH). The segment covering 51–61 (NNASASGNATQ) has biased composition (polar residues). Residues 62–73 (TESGSEEVSSTV) show a composition bias toward low complexity. Over residues 202-223 (HSHHSHHGHPSHQSHSLPNRRH) the composition is skewed to basic residues.

This is an uncharacterized protein from Homo sapiens (Human).